Here is a 659-residue protein sequence, read N- to C-terminus: Acetyl-coenzyme A synthetase (659 aa).

The segment at 1 to 35 is disordered; that stretch reads MATEQTKGQSSESISSVLSERRKFPPPEAFSSQSH. Residues 205 to 208, Thr-323, and Asn-347 each bind CoA; that span reads RRGS. Residues 399-401, 423-428, Asp-512, and Arg-527 contribute to the ATP site; these read GEP and DTWWQT. Ser-535 is a binding site for CoA. Arg-538 contributes to the ATP binding site. Mg(2+)-binding residues include Val-549, His-551, and Val-554. The residue at position 621 (Lys-621) is an N6-acetyllysine.

The protein belongs to the ATP-dependent AMP-binding enzyme family. Mg(2+) is required as a cofactor. Post-translationally, acetylated. Deacetylation by the SIR2-homolog deacetylase activates the enzyme.

It carries out the reaction acetate + ATP + CoA = acetyl-CoA + AMP + diphosphate. Catalyzes the conversion of acetate into acetyl-CoA (AcCoA), an essential intermediate at the junction of anabolic and catabolic pathways. AcsA undergoes a two-step reaction. In the first half reaction, AcsA combines acetate with ATP to form acetyl-adenylate (AcAMP) intermediate. In the second half reaction, it can then transfer the acetyl group from AcAMP to the sulfhydryl group of CoA, forming the product AcCoA. The polypeptide is Acetyl-coenzyme A synthetase (Chlorobaculum tepidum (strain ATCC 49652 / DSM 12025 / NBRC 103806 / TLS) (Chlorobium tepidum)).